A 299-amino-acid polypeptide reads, in one-letter code: Virginiamycin B lyase (299 aa).

His-229 lines the substrate pocket. Mg(2+) is bound at residue Glu-269. His-271 (proton acceptor) is an active-site residue. A Mg(2+)-binding site is contributed by Glu-286.

Belongs to the Vgb family. Monomer. Mg(2+) serves as cofactor.

In terms of biological role, inactivates the type B streptogramin antibiotics by linearizing the lactone ring at the ester linkage, generating a free phenylglycine carboxylate and converting the threonyl moiety into 2-amino-butenoic acid. In Bordetella parapertussis (strain 12822 / ATCC BAA-587 / NCTC 13253), this protein is Virginiamycin B lyase.